The primary structure comprises 180 residues: Shikimate kinase (180 aa).

An ATP-binding site is contributed by 14–19 (GAGKSC). Ser18 contacts Mg(2+). The substrate site is built by Asp36, Arg60, and Gly82. Arg120 lines the ATP pocket. Arg139 lines the substrate pocket.

This sequence belongs to the shikimate kinase family. As to quaternary structure, monomer. It depends on Mg(2+) as a cofactor.

Its subcellular location is the cytoplasm. The catalysed reaction is shikimate + ATP = 3-phosphoshikimate + ADP + H(+). It functions in the pathway metabolic intermediate biosynthesis; chorismate biosynthesis; chorismate from D-erythrose 4-phosphate and phosphoenolpyruvate: step 5/7. Functionally, catalyzes the specific phosphorylation of the 3-hydroxyl group of shikimic acid using ATP as a cosubstrate. The protein is Shikimate kinase of Xanthomonas oryzae pv. oryzae (strain PXO99A).